The sequence spans 88 residues: Large ribosomal subunit protein eL31 (88 aa).

This sequence belongs to the eukaryotic ribosomal protein eL31 family.

This is Large ribosomal subunit protein eL31 (rpl31e) from Archaeoglobus fulgidus (strain ATCC 49558 / DSM 4304 / JCM 9628 / NBRC 100126 / VC-16).